Here is a 298-residue protein sequence, read N- to C-terminus: 4-hydroxy-tetrahydrodipicolinate synthase (298 aa).

Threonine 48 is a pyruvate binding site. The active-site Proton donor/acceptor is the tyrosine 137. Lysine 166 acts as the Schiff-base intermediate with substrate in catalysis. Isoleucine 207 serves as a coordination point for pyruvate.

It belongs to the DapA family. Homotetramer; dimer of dimers.

Its subcellular location is the cytoplasm. The enzyme catalyses L-aspartate 4-semialdehyde + pyruvate = (2S,4S)-4-hydroxy-2,3,4,5-tetrahydrodipicolinate + H2O + H(+). It functions in the pathway amino-acid biosynthesis; L-lysine biosynthesis via DAP pathway; (S)-tetrahydrodipicolinate from L-aspartate: step 3/4. Catalyzes the condensation of (S)-aspartate-beta-semialdehyde [(S)-ASA] and pyruvate to 4-hydroxy-tetrahydrodipicolinate (HTPA). This chain is 4-hydroxy-tetrahydrodipicolinate synthase, found in Campylobacter jejuni subsp. jejuni serotype O:23/36 (strain 81-176).